A 1008-amino-acid polypeptide reads, in one-letter code: Translation initiation factor IF-2 (1008 aa).

Disordered stretches follow at residues 113–136 (AVTAQEAPKTAPTAESPEDVKGNV), 153–235 (DKDS…PAAP), and 253–405 (GLTV…YRKD). Composition is skewed to basic and acidic residues over residues 153–180 (DKDSKKSAKNTKPVEKVAAEKPIEKAKP) and 189–213 (PKPEPKQETPKTEQPVKKETPKAET). 2 stretches are compositionally biased toward low complexity: residues 294–329 (GPNKPAGANPNGPRPAGSNPNGPRPQGTNPNGPRPQ) and 342–358 (GGPNRPGVPNRPNSNGP). Positions 365–381 (ASEKGEVTGKQIQDKIK) are enriched in basic and acidic residues. The tr-type G domain occupies 507-677 (DRAPIVTIMG…LLEAEMLELK (171 aa)). Residues 516–523 (GHVDHGKT) are G1. A GTP-binding site is contributed by 516 to 523 (GHVDHGKT). Positions 541–545 (GITQH) are G2. The G3 stretch occupies residues 563 to 566 (DTPG). GTP is bound by residues 563 to 567 (DTPGH) and 617 to 620 (NKID). A G4 region spans residues 617 to 620 (NKID). The segment at 653 to 655 (SAK) is G5.

It belongs to the TRAFAC class translation factor GTPase superfamily. Classic translation factor GTPase family. IF-2 subfamily.

It is found in the cytoplasm. Functionally, one of the essential components for the initiation of protein synthesis. Protects formylmethionyl-tRNA from spontaneous hydrolysis and promotes its binding to the 30S ribosomal subunits. Also involved in the hydrolysis of GTP during the formation of the 70S ribosomal complex. This Cytophaga hutchinsonii (strain ATCC 33406 / DSM 1761 / CIP 103989 / NBRC 15051 / NCIMB 9469 / D465) protein is Translation initiation factor IF-2.